The following is a 195-amino-acid chain: Small ribosomal subunit protein uS4 (195 aa).

The region spanning 88–150 (RRLENVVYRL…SKNVELIKLA (63 aa)) is the S4 RNA-binding domain.

This sequence belongs to the universal ribosomal protein uS4 family. As to quaternary structure, part of the 30S ribosomal subunit. Contacts protein S5. The interaction surface between S4 and S5 is involved in control of translational fidelity.

Functionally, one of the primary rRNA binding proteins, it binds directly to 16S rRNA where it nucleates assembly of the body of the 30S subunit. In terms of biological role, with S5 and S12 plays an important role in translational accuracy. The sequence is that of Small ribosomal subunit protein uS4 from Fusobacterium nucleatum subsp. nucleatum (strain ATCC 25586 / DSM 15643 / BCRC 10681 / CIP 101130 / JCM 8532 / KCTC 2640 / LMG 13131 / VPI 4355).